We begin with the raw amino-acid sequence, 530 residues long: Growth-regulating factor 1 (530 aa).

A disordered region spans residues 1 to 41; that stretch reads MDLGVRVSGHETVSSPGQTELGSGFSNKQERSGFDGEDCWR. Polar residues predominate over residues 11–27; that stretch reads ETVSSPGQTELGSGFSN. Over residues 28–41 the composition is skewed to basic and acidic residues; sequence KQERSGFDGEDCWR. The region spanning 133–168 is the QLQ domain; that stretch reads PFSLTQWAELEQQALIYKYITANVPVPSSLLLSLKK. The WRC domain maps to 196 to 240; it reads DPEPGRCRRTDGKKWRCSRDAVPDQKYCERHINRGRHRSRKPVEG. 2 short sequence motifs (bipartite nuclear localization signal) span residues 201–211 and 229–236; these read RCRRTDGKKWR and RGRHRSRK. Disordered regions lie at residues 223 to 250 and 485 to 530; these read CERH…NAAA and STFG…APSL. Positions 485 to 508 are enriched in low complexity; the sequence is STFGSLSNSSSASSTIIGDNNNKN. A compositionally biased stretch (polar residues) spans 519 to 530; the sequence is TLMNTSATAPSL.

Belongs to the GRF family. As to quaternary structure, interacts with GIF1 and GIF2. As to expression, strongly expressed in actively growing and developing tissues, such as roots, upper stems, and shoot tips containing the shoot apical meristem (SAM) and flower buds. Also expressed in mature flowers, but weakly expressed in mature stems and leaves.

It is found in the nucleus. Its function is as follows. Transcription activator that plays a role in the regulation of cell expansion in leaf and cotyledons tissues. Component of a network formed by miR396, the GRFs and their interacting factors (GIFs) acting in the regulation of meristem function, at least partially through the control of cell proliferation. microRNA396-GRF1/GRF3 regulatory module acts as a developmental regulator in the reprogramming of root cells during cyst nematode infection, leading to the formation of the syncytium. In Arabidopsis thaliana (Mouse-ear cress), this protein is Growth-regulating factor 1 (GRF1).